The following is a 440-amino-acid chain: tRNA(Ile)-lysidine synthase (440 aa).

31-36 (SGGADS) contributes to the ATP binding site.

The protein belongs to the tRNA(Ile)-lysidine synthase family.

The protein localises to the cytoplasm. The enzyme catalyses cytidine(34) in tRNA(Ile2) + L-lysine + ATP = lysidine(34) in tRNA(Ile2) + AMP + diphosphate + H(+). Its function is as follows. Ligates lysine onto the cytidine present at position 34 of the AUA codon-specific tRNA(Ile) that contains the anticodon CAU, in an ATP-dependent manner. Cytidine is converted to lysidine, thus changing the amino acid specificity of the tRNA from methionine to isoleucine. The protein is tRNA(Ile)-lysidine synthase of Borrelia garinii subsp. bavariensis (strain ATCC BAA-2496 / DSM 23469 / PBi) (Borreliella bavariensis).